The primary structure comprises 222 residues: UPF0758 protein YicR (222 aa).

In terms of domain architecture, MPN spans 100–222 (PLLSPEMTRE…YVSFAERGWI (123 aa)). 3 residues coordinate Zn(2+): His-171, His-173, and Asp-184. A JAMM motif motif is present at residues 171–184 (HNHPSGCAEPSKAD).

The protein belongs to the UPF0758 family. YicR subfamily.

The chain is UPF0758 protein YicR from Escherichia coli O45:K1 (strain S88 / ExPEC).